Consider the following 487-residue polypeptide: uncharacterized protein (487 aa).

The protein belongs to the UbiD family.

This is an uncharacterized protein from Aeropyrum pernix (strain ATCC 700893 / DSM 11879 / JCM 9820 / NBRC 100138 / K1).